We begin with the raw amino-acid sequence, 54 residues long: UPF0181 protein PM0480 (54 aa).

Belongs to the UPF0181 family.

This Pasteurella multocida (strain Pm70) protein is UPF0181 protein PM0480.